The chain runs to 190 residues: Threonylcarbamoyl-AMP synthase (190 aa).

In terms of domain architecture, YrdC-like spans 7 to 190 (RAALSDVLQA…ALTGKQFRQG (184 aa)).

It belongs to the SUA5 family. TsaC subfamily.

The protein localises to the cytoplasm. The catalysed reaction is L-threonine + hydrogencarbonate + ATP = L-threonylcarbamoyladenylate + diphosphate + H2O. Its function is as follows. Required for the formation of a threonylcarbamoyl group on adenosine at position 37 (t(6)A37) in tRNAs that read codons beginning with adenine. Catalyzes the conversion of L-threonine, HCO(3)(-)/CO(2) and ATP to give threonylcarbamoyl-AMP (TC-AMP) as the acyladenylate intermediate, with the release of diphosphate. The protein is Threonylcarbamoyl-AMP synthase of Yersinia enterocolitica serotype O:8 / biotype 1B (strain NCTC 13174 / 8081).